Here is a 172-residue protein sequence, read N- to C-terminus: 3-hydroxydecanoyl-[acyl-carrier-protein] dehydratase (172 aa).

Residue His-71 is part of the active site.

The protein belongs to the thioester dehydratase family. FabA subfamily. As to quaternary structure, homodimer.

It localises to the cytoplasm. The enzyme catalyses a (3R)-hydroxyacyl-[ACP] = a (2E)-enoyl-[ACP] + H2O. It carries out the reaction (3R)-hydroxydecanoyl-[ACP] = (2E)-decenoyl-[ACP] + H2O. The catalysed reaction is (2E)-decenoyl-[ACP] = (3Z)-decenoyl-[ACP]. It functions in the pathway lipid metabolism; fatty acid biosynthesis. Its function is as follows. Necessary for the introduction of cis unsaturation into fatty acids. Catalyzes the dehydration of (3R)-3-hydroxydecanoyl-ACP to E-(2)-decenoyl-ACP and then its isomerization to Z-(3)-decenoyl-ACP. Can catalyze the dehydratase reaction for beta-hydroxyacyl-ACPs with saturated chain lengths up to 16:0, being most active on intermediate chain length. The protein is 3-hydroxydecanoyl-[acyl-carrier-protein] dehydratase of Vibrio vulnificus (strain CMCP6).